The following is a 100-amino-acid chain: MPKKRLVGVVVSDKMDKTVTVKVERLVKHAKFGKYVKRTKKFYAHDENNACRVGDVVEIEESRPLSKLKRWVVVNILERSKLSETPEIEETIDIEGGSEQ.

This sequence belongs to the universal ribosomal protein uS17 family. As to quaternary structure, part of the 30S ribosomal subunit.

One of the primary rRNA binding proteins, it binds specifically to the 5'-end of 16S ribosomal RNA. This chain is Small ribosomal subunit protein uS17, found in Fervidobacterium nodosum (strain ATCC 35602 / DSM 5306 / Rt17-B1).